The following is a 468-amino-acid chain: Protein C-ets-2 (468 aa).

Residues 85–170 form the PNT domain; it reads ATFSGFQKEQ…EHLEQMIKEN (86 aa). A phosphoserine mark is found at serine 220 and serine 225. Residues 262–290 form a disordered region; it reads VNLLNNNSGKPKDHDSPENGGDSFESSDS. Residues serine 294, serine 297, and serine 300 each carry the phosphoserine modification. The ETS DNA-binding region spans 362–442; the sequence is IQLWQFLLEL…SGKRYVYRFV (81 aa).

It belongs to the ETS family. In terms of processing, phosphorylation by CDK10 at Ser-220 and Ser-225 creates a phosphodegron that targets ETS2 for proteasomal degradation.

The protein localises to the nucleus. Transcription factor activating transcription. Binds specifically the GGA DNA motif in gene promoters and stimulates transcription of those genes. In Mus musculus (Mouse), this protein is Protein C-ets-2 (Ets2).